Here is a 587-residue protein sequence, read N- to C-terminus: Zinc finger protein 69 (587 aa).

The disordered stretch occupies residues 42-128 (NGTQQESLAD…TPGTTAAGSQ (87 aa)). In terms of domain architecture, KRAB spans 76 to 147 (HDEATPGTPA…VDLSQEEWGQ (72 aa)). 9 consecutive C2H2-type zinc fingers follow at residues 271–293 (HKKK…ILEQ), 299–321 (KPAR…CMRA), 327–349 (NVCE…HTGE), 355–377 (KECG…HTGE), 383–405 (EECG…HTGE), 411–433 (DKCQ…HSGE), 439–461 (SECG…HTGE), 467–489 (TSCC…HTGE), and 495–517 (KECG…HTGV). The segment at 564–587 (SRHQKIHRRNTFRDDPGHENKRQL) is disordered. Positions 574 to 587 (TFRDDPGHENKRQL) are enriched in basic and acidic residues.

It belongs to the krueppel C2H2-type zinc-finger protein family.

The protein resides in the nucleus. In terms of biological role, putative transcription factor that appears to regulate lipid metabolism. In Mus musculus (Mouse), this protein is Zinc finger protein 69.